Here is a 397-residue protein sequence, read N- to C-terminus: Tryptophan synthase beta chain (397 aa).

Position 88 is an N6-(pyridoxal phosphate)lysine (Lys-88).

This sequence belongs to the TrpB family. As to quaternary structure, tetramer of two alpha and two beta chains. The cofactor is pyridoxal 5'-phosphate.

The enzyme catalyses (1S,2R)-1-C-(indol-3-yl)glycerol 3-phosphate + L-serine = D-glyceraldehyde 3-phosphate + L-tryptophan + H2O. It participates in amino-acid biosynthesis; L-tryptophan biosynthesis; L-tryptophan from chorismate: step 5/5. In terms of biological role, the beta subunit is responsible for the synthesis of L-tryptophan from indole and L-serine. The polypeptide is Tryptophan synthase beta chain (Haemophilus influenzae (strain PittEE)).